A 458-amino-acid polypeptide reads, in one-letter code: Cysteine--tRNA ligase (458 aa).

Position 33 (Cys-33) interacts with Zn(2+). The short motif at 35–45 (PTVYDFAHIGN) is the 'HIGH' region element. 3 residues coordinate Zn(2+): Cys-221, His-246, and Glu-250. Positions 279 to 283 (KMSKS) match the 'KMSKS' region motif. Lys-282 is a binding site for ATP.

Belongs to the class-I aminoacyl-tRNA synthetase family. Monomer. Zn(2+) is required as a cofactor.

It localises to the cytoplasm. It catalyses the reaction tRNA(Cys) + L-cysteine + ATP = L-cysteinyl-tRNA(Cys) + AMP + diphosphate. The chain is Cysteine--tRNA ligase from Rhizobium etli (strain ATCC 51251 / DSM 11541 / JCM 21823 / NBRC 15573 / CFN 42).